The chain runs to 461 residues: Cysteine--tRNA ligase (461 aa).

Cys28 provides a ligand contact to Zn(2+). The 'HIGH' region signature appears at 30 to 40 (VTIYDLCHIGH). The Zn(2+) site is built by Cys209, His234, and Glu238. A 'KMSKS' region motif is present at residues 266-270 (KMSKS). Lys269 serves as a coordination point for ATP.

It belongs to the class-I aminoacyl-tRNA synthetase family. Monomer. Zn(2+) is required as a cofactor.

The protein localises to the cytoplasm. It carries out the reaction tRNA(Cys) + L-cysteine + ATP = L-cysteinyl-tRNA(Cys) + AMP + diphosphate. The sequence is that of Cysteine--tRNA ligase from Serratia proteamaculans (strain 568).